A 932-amino-acid chain; its full sequence is Probable serine/threonine-protein kinase clkA (932 aa).

Residues Met-1–Thr-10 are compositionally biased toward basic residues. Disordered stretches follow at residues Met-1–Tyr-21, Tyr-39–Thr-198, and Asn-212–Asn-562. 2 stretches are compositionally biased toward low complexity: residues Tyr-11–Tyr-21 and Tyr-39–Tyr-123. A compositionally biased stretch (polar residues) spans Phe-124–Leu-143. Composition is skewed to low complexity over residues Asp-148–Gly-196, Asn-218–Asn-305, Val-314–Tyr-342, and Asn-351–Asn-562. The Protein kinase domain occupies Tyr-590–Leu-920. Residues Val-596–Val-604 and Lys-619 contribute to the ATP site. The active-site Proton acceptor is Asp-719.

The protein belongs to the protein kinase superfamily. CMGC Ser/Thr protein kinase family.

The catalysed reaction is L-seryl-[protein] + ATP = O-phospho-L-seryl-[protein] + ADP + H(+). The enzyme catalyses L-threonyl-[protein] + ATP = O-phospho-L-threonyl-[protein] + ADP + H(+). The sequence is that of Probable serine/threonine-protein kinase clkA (clkA) from Dictyostelium discoideum (Social amoeba).